We begin with the raw amino-acid sequence, 468 residues long: Glutamine synthetase (468 aa).

The 85-residue stretch at 14 to 98 (HDVKYVDLRF…ILCDVYEPST (85 aa)) folds into the GS beta-grasp domain. The GS catalytic domain occupies 106 to 468 (PRGIAKAAEK…PIEYKMYYSV (363 aa)). Positions 131 and 133 each coordinate Mg(2+). Glutamate 209 is an ATP binding site. The Mg(2+) site is built by glutamate 214 and glutamate 221. Residues 265-266 (NG) and glycine 266 contribute to the L-glutamate site. Position 270 (histidine 270) interacts with Mg(2+). ATP is bound by residues 272-274 (HQS) and serine 274. The L-glutamate site is built by arginine 322, glutamate 328, and arginine 340. ATP-binding residues include arginine 340, arginine 345, and lysine 353. Residue glutamate 358 participates in Mg(2+) binding. Position 360 (arginine 360) interacts with L-glutamate. Tyrosine 398 is modified (O-AMP-tyrosine).

The protein belongs to the glutamine synthetase family. In terms of assembly, oligomer of 12 subunits arranged in the form of two hexameric ring. Mg(2+) serves as cofactor.

It is found in the cytoplasm. The enzyme catalyses L-glutamate + NH4(+) + ATP = L-glutamine + ADP + phosphate + H(+). With respect to regulation, the activity of this enzyme could be controlled by adenylation under conditions of abundant glutamine. In terms of biological role, catalyzes the ATP-dependent biosynthesis of glutamine from glutamate and ammonia. The sequence is that of Glutamine synthetase from Azospirillum brasilense.